Here is an 81-residue protein sequence, read N- to C-terminus: Translational regulator CsrA (81 aa).

Residues 59 to 71 (SQMQHLEQGNFPT) are compositionally biased toward polar residues. The disordered stretch occupies residues 59-81 (SQMQHLEQGNFPTSFDDDDFFNR).

It belongs to the CsrA/RsmA family. In terms of assembly, homodimer; the beta-strands of each monomer intercalate to form a hydrophobic core, while the alpha-helices form wings that extend away from the core.

It is found in the cytoplasm. Functionally, a key translational regulator that binds mRNA to regulate translation initiation and/or mRNA stability. Mediates global changes in gene expression, shifting from rapid growth to stress survival by linking envelope stress, the stringent response and the catabolite repression systems. Usually binds in the 5'-UTR; binding at or near the Shine-Dalgarno sequence prevents ribosome-binding, repressing translation, binding elsewhere in the 5'-UTR can activate translation and/or stabilize the mRNA. Its function is antagonized by small RNA(s). The chain is Translational regulator CsrA from Psychrobacter sp. (strain PRwf-1).